The primary structure comprises 221 residues: Uracil-DNA glycosylase (221 aa).

The active-site Proton acceptor is aspartate 65.

The protein belongs to the uracil-DNA glycosylase (UDG) superfamily. UNG family.

It is found in the cytoplasm. The enzyme catalyses Hydrolyzes single-stranded DNA or mismatched double-stranded DNA and polynucleotides, releasing free uracil.. Its function is as follows. Excises uracil residues from the DNA which can arise as a result of misincorporation of dUMP residues by DNA polymerase or due to deamination of cytosine. The chain is Uracil-DNA glycosylase from Flavobacterium johnsoniae (strain ATCC 17061 / DSM 2064 / JCM 8514 / BCRC 14874 / CCUG 350202 / NBRC 14942 / NCIMB 11054 / UW101) (Cytophaga johnsonae).